A 421-amino-acid chain; its full sequence is Early growth response protein 2 (421 aa).

The segment covering 127 to 145 (CSSTSSSNASSGSPNLSCS) has biased composition (low complexity). Disordered stretches follow at residues 127-152 (CSST…PQSD), 179-200 (SPTA…ASDG), and 223-288 (SDRK…ERPY). Positions 236 to 247 (PLSTIRNFTLGG) are enriched in polar residues. 3 consecutive C2H2-type zinc fingers follow at residues 288-312 (YPCP…IRIH), 318-340 (FQCR…IRTH), and 346-368 (FACD…TKIH).

Belongs to the EGR C2H2-type zinc-finger protein family.

Its subcellular location is the nucleus. Functionally, sequence-specific DNA-binding transcription factor. This Xenopus laevis (African clawed frog) protein is Early growth response protein 2 (egr2).